We begin with the raw amino-acid sequence, 123 residues long: Beta-defensin 126 (123 aa).

Positions 1-20 (MKSLLFTLAVFMLLAQLVSG) are cleaved as a signal peptide. Residues 21 to 63 (NLYVKRCLNDIGICKKTCKPEEVRSEHGWVMCGKRKACCVPAD) are in vitro binds to LPS, mediates antimicrobial activity and inhibits LPS-mediated inflammation. Disulfide bonds link Cys27/Cys58, Cys34/Cys52, and Cys38/Cys59.

It belongs to the beta-defensin family. Homodimer or homooligomer; disulfide-linked. O-glycosylated; glycans contain sialic acids alpha(2,3)-linked to galactose and N-acetylgalactosamine. The C-terminal O-glycosylation contributes substantially to the sperm glyocalyx. High-level and epididymis-specific expression. Detected in epithelial cells lining the efferent ductules, initial segment, and cauda regions of the epididymis, but not on spermatozoa.

The protein localises to the secreted. Functionally, highly glycosylated atypical beta-defensin involved in several aspects of sperm function. Facilitates sperm transport in the female reproductive tract and contributes to sperm protection against immunodetection; both functions are probably implicating the negative surface charge provided by its O-linked oligosaccharides in the sperm glycocalyx. Involved in binding of sperm to oviductal epithelial cells to form a sperm reservoir until ovulation. Release from the sperm surface during capacitation and ovaluation by an elevation of oviductal fluid pH is unmasking other surface components and allows sperm to penetrate the cumulus matrix and bind to the zona pellucida of the oocyte. In vitro has antimicrobial activity and may inhibit LPS-mediated inflammation. This is Beta-defensin 126 (DEFB126) from Macaca fascicularis (Crab-eating macaque).